The primary structure comprises 227 residues: NAD(P)H-hydrate epimerase (227 aa).

Positions 12-221 constitute a YjeF N-terminal domain; sequence SRLVDELAIA…DIGVPRALLE (210 aa). 59 to 63 serves as a coordination point for (6S)-NADPHX; that stretch reads NNGGD. Positions 60 and 131 each coordinate K(+). (6S)-NADPHX contacts are provided by residues 135 to 141 and D164; that span reads GTGATGE. T167 provides a ligand contact to K(+).

It belongs to the NnrE/AIBP family. K(+) is required as a cofactor.

It catalyses the reaction (6R)-NADHX = (6S)-NADHX. The enzyme catalyses (6R)-NADPHX = (6S)-NADPHX. Functionally, catalyzes the epimerization of the S- and R-forms of NAD(P)HX, a damaged form of NAD(P)H that is a result of enzymatic or heat-dependent hydration. This is a prerequisite for the S-specific NAD(P)H-hydrate dehydratase to allow the repair of both epimers of NAD(P)HX. The protein is NAD(P)H-hydrate epimerase of Pirellula staleyi (strain ATCC 27377 / DSM 6068 / ICPB 4128) (Pirella staleyi).